We begin with the raw amino-acid sequence, 307 residues long: Membrane protein insertase YidC 2 (307 aa).

The signal sequence occupies residues 1–23 (MKLTLNRILFSGLALSILFTLTG). Cysteine 24 is lipidated: N-palmitoyl cysteine. A lipid anchor (S-diacylglycerol cysteine) is attached at cysteine 24. The next 5 membrane-spanning stretches (helical) occupy residues 58–78 (LGYG…ILPL), 135–155 (LGGI…AMYF), 179–199 (VLTA…MMAV), 209–225 (TMMY…SFSL), and 231–251 (LYWL…TYLL). The disordered stretch occupies residues 263-307 (YAKNPPKAYQSTSSRKDVTPSQNMEQANLPKKIKSNRNAGKQRKR). Residues 271 to 288 (YQSTSSRKDVTPSQNMEQ) are compositionally biased toward polar residues. A compositionally biased stretch (basic residues) spans 293 to 307 (KKIKSNRNAGKQRKR).

It belongs to the OXA1/ALB3/YidC family. Type 2 subfamily.

The protein localises to the cell membrane. Required for the insertion and/or proper folding and/or complex formation of integral membrane proteins into the membrane. Involved in integration of membrane proteins that insert both dependently and independently of the Sec translocase complex, as well as at least some lipoproteins. The chain is Membrane protein insertase YidC 2 from Streptococcus pyogenes serotype M3 (strain ATCC BAA-595 / MGAS315).